The following is a 441-amino-acid chain: Glutamyl-tRNA reductase (441 aa).

Substrate-binding positions include 49–52 (TCNR), Ser110, 115–117 (EPQ), and Gln121. The Nucleophile role is filled by Cys50. 190–195 (GAGEMA) lines the NADP(+) pocket.

The protein belongs to the glutamyl-tRNA reductase family. Homodimer.

It catalyses the reaction (S)-4-amino-5-oxopentanoate + tRNA(Glu) + NADP(+) = L-glutamyl-tRNA(Glu) + NADPH + H(+). It functions in the pathway porphyrin-containing compound metabolism; protoporphyrin-IX biosynthesis; 5-aminolevulinate from L-glutamyl-tRNA(Glu): step 1/2. Functionally, catalyzes the NADPH-dependent reduction of glutamyl-tRNA(Glu) to glutamate 1-semialdehyde (GSA). The chain is Glutamyl-tRNA reductase from Sulfurihydrogenibium sp. (strain YO3AOP1).